Here is a 596-residue protein sequence, read N- to C-terminus: Probable ABC transporter ECU01_0200/ECU01_1410 (596 aa).

The next 3 membrane-spanning stretches (helical) occupy residues 26–46, 173–193, and 289–309; these read ALMA…VMSI, LVPI…MLRI, and LSVL…LGGI. Residues 39-318 form the ABC transmembrane type-1 domain; that stretch reads KWFDVMSIKR…IARDLGFWLT (280 aa). Residues 361 to 593 form the ABC transporter domain; the sequence is VEFDDVSFAY…RGMYWRMKTA (233 aa). ATP contacts are provided by residues Tyr370 and 400–411; that span reads GRPGSGKSTILR.

It belongs to the ABC transporter superfamily. ABCB family. Heavy Metal importer (TC 3.A.1.210) subfamily.

It localises to the membrane. The sequence is that of Probable ABC transporter ECU01_0200/ECU01_1410 from Encephalitozoon cuniculi (strain GB-M1) (Microsporidian parasite).